The primary structure comprises 667 residues: Long-chain fatty acid transport protein 3 (667 aa).

The helical transmembrane segment at 3–23 (ALLLLLPLLLLLPLLLKLDVW) threads the bilayer. The tract at residues 114–144 (TGGRRGSGRGSTEEGARVAPPAGDAAARGTT) is disordered. Residues 130–144 (RVAPPAGDAAARGTT) show a composition bias toward low complexity. ATP is bound by residues 272-276 (TSGTT), His-315, Thr-412, Asp-512, Arg-527, and Lys-619.

Belongs to the ATP-dependent AMP-binding enzyme family. In terms of tissue distribution, expressed at high levels in adrenal gland, testis and ovary. Expressed at lower levels in adult brain. Found in adrenal cortical cells, spermatocytes and interstitial cells of the testis, theca cells of the ovary, cerebral cortical neurons, and cerebellar Purkinje cells (at protein level).

The protein localises to the mitochondrion membrane. It carries out the reaction a fatty acid(in) = a fatty acid(out). It catalyses the reaction a long-chain fatty acid + ATP + CoA = a long-chain fatty acyl-CoA + AMP + diphosphate. The enzyme catalyses (5Z,8Z,11Z,14Z)-eicosatetraenoate + ATP + CoA = (5Z,8Z,11Z,14Z)-eicosatetraenoyl-CoA + AMP + diphosphate. The catalysed reaction is hexadecanoate + ATP + CoA = hexadecanoyl-CoA + AMP + diphosphate. It carries out the reaction (9Z)-octadecenoate + ATP + CoA = (9Z)-octadecenoyl-CoA + AMP + diphosphate. It catalyses the reaction (9Z,12Z)-octadecadienoate + ATP + CoA = (9Z,12Z)-octadecadienoyl-CoA + AMP + diphosphate. The enzyme catalyses a very long-chain fatty acid + ATP + CoA = a very long-chain fatty acyl-CoA + AMP + diphosphate. The catalysed reaction is tetracosanoate + ATP + CoA = tetracosanoyl-CoA + AMP + diphosphate. In terms of biological role, mainly functions as an acyl-CoA ligase catalyzing the ATP-dependent formation of fatty acyl-CoA using LCFA and very-long-chain fatty acids (VLCFA) as substrates. Can mediate the levels of long-chain fatty acids (LCFA) in the cell by facilitating their transport across membranes. This is Long-chain fatty acid transport protein 3 (Slc27a3) from Mus musculus (Mouse).